The primary structure comprises 106 residues: Protein U4 (106 aa).

Residues 5–25 (FFISIILFVVLLNPSLIINMV) form a helical membrane-spanning segment.

Belongs to the nanovirus U4 protein family.

Its subcellular location is the membrane. The protein is Protein U4 (DNA-U4) of Cicer arietinum (Chickpea).